The primary structure comprises 152 residues: 3-hydroxyacyl-[acyl-carrier-protein] dehydratase FabZ (152 aa).

Residue H54 is part of the active site.

The protein belongs to the thioester dehydratase family. FabZ subfamily.

It localises to the cytoplasm. The catalysed reaction is a (3R)-hydroxyacyl-[ACP] = a (2E)-enoyl-[ACP] + H2O. In terms of biological role, involved in unsaturated fatty acids biosynthesis. Catalyzes the dehydration of short chain beta-hydroxyacyl-ACPs and long chain saturated and unsaturated beta-hydroxyacyl-ACPs. The chain is 3-hydroxyacyl-[acyl-carrier-protein] dehydratase FabZ from Buchnera aphidicola subsp. Schizaphis graminum (strain Sg).